We begin with the raw amino-acid sequence, 716 residues long: MLPEEDLKIIKKELGREPTLVEQGCFLNLWSEHCSYRSSAPLLKTFTTTGENVIIGPGDDAAIIKFEDGYVLAIGMESHNHPSYVDPYNGAATGVGGIVRDIISMGARPIALMDPLYFGPLDTPKNLFLFEQIIKGIAGYGNCIGVPVVNGETFFDRRYSGNPLVNVVAVGLCKEEKVMTSRSQKAGNKLILAGSSTGKDGLGGASFASRDLSESAEAEDRPSVQVGDPYTEKLVMEMTLEAIDKGYIKSCKDLGAAGLGGASSELAAKGGLGAYIIADAVPQREPEMNAYEILLAESQERMVFEVAPEDVDAVLALVQKYDLNGAVIGHLTEKPNYTVEFRGEIVADIPIGFLTGGAPTCEKPSEAPIHREEGKKPETPEDLKAAFMKVLSSHNIASKEWIYRQYDHEVQLRTVVKPGEDSGVLRITDKKGIALSCGCQPRATLLDPYTGGRTAIIENAMNLAVKGAEGLAIVNCLNFGNPENPETYWQFKNAVLGLGDAARELSIPVVGGNVSLYNESDEFRTAIPPTPSIGMIGKVDLETPLPSGFFAKTGDSIILVGETVPEMGGSEYYSCMGAGNAGKVPEVPKNAPEIIKAVIEAVKSGKLNSAHDISLGGIGAGLARMCKNMGGKVDVSEIAGGMKEDEFLFSEAPARALLATAEPEAVQELLKGVPHAVIGTVGGDALEIKGKDFELFISLEEIKNAHESLTKFMMMG.

Histidine 33 is an active-site residue. Tyrosine 36 is an ATP binding site. Glutamate 77 serves as a coordination point for Mg(2+). Residues 78 to 81 (SHNH) and arginine 100 each bind substrate. The active-site Proton acceptor is the histidine 79. Position 101 (aspartate 101) interacts with Mg(2+). Residue glutamine 225 participates in substrate binding. A Mg(2+)-binding site is contributed by aspartate 253. 297–299 (ESQ) provides a ligand contact to substrate. Asparagine 475 and glycine 512 together coordinate ATP. A Mg(2+)-binding site is contributed by asparagine 513. Serine 515 lines the substrate pocket.

It belongs to the FGAMS family. In terms of assembly, monomer. Part of the FGAM synthase complex composed of 1 PurL, 1 PurQ and 2 PurS subunits.

Its subcellular location is the cytoplasm. The enzyme catalyses N(2)-formyl-N(1)-(5-phospho-beta-D-ribosyl)glycinamide + L-glutamine + ATP + H2O = 2-formamido-N(1)-(5-O-phospho-beta-D-ribosyl)acetamidine + L-glutamate + ADP + phosphate + H(+). Its pathway is purine metabolism; IMP biosynthesis via de novo pathway; 5-amino-1-(5-phospho-D-ribosyl)imidazole from N(2)-formyl-N(1)-(5-phospho-D-ribosyl)glycinamide: step 1/2. Its function is as follows. Part of the phosphoribosylformylglycinamidine synthase complex involved in the purines biosynthetic pathway. Catalyzes the ATP-dependent conversion of formylglycinamide ribonucleotide (FGAR) and glutamine to yield formylglycinamidine ribonucleotide (FGAM) and glutamate. The FGAM synthase complex is composed of three subunits. PurQ produces an ammonia molecule by converting glutamine to glutamate. PurL transfers the ammonia molecule to FGAR to form FGAM in an ATP-dependent manner. PurS interacts with PurQ and PurL and is thought to assist in the transfer of the ammonia molecule from PurQ to PurL. This is Phosphoribosylformylglycinamidine synthase subunit PurL from Methanosarcina mazei (strain ATCC BAA-159 / DSM 3647 / Goe1 / Go1 / JCM 11833 / OCM 88) (Methanosarcina frisia).